The chain runs to 281 residues: Putative glutamine amidotransferase-like protein RP404 (281 aa).

Positions 19–281 (KYTYADFPWY…KALVKASKYI (263 aa)) constitute a Glutamine amidotransferase type-1 domain. The region spanning 139–174 (RHFSKLTYSKKFECNTEAFATTVYTLPIKLEFENAP) is the RPE1 insert domain.

The protein is Putative glutamine amidotransferase-like protein RP404 of Rickettsia prowazekii (strain Madrid E).